The primary structure comprises 150 residues: Ribosome maturation factor RimP (150 aa).

Belongs to the RimP family.

The protein localises to the cytoplasm. Functionally, required for maturation of 30S ribosomal subunits. This is Ribosome maturation factor RimP from Thermotoga neapolitana (strain ATCC 49049 / DSM 4359 / NBRC 107923 / NS-E).